A 364-amino-acid chain; its full sequence is PDZ and LIM domain protein 3 (364 aa).

Residues 1–84 form the PDZ domain; the sequence is MPQTVILPGP…QLCLKIDRGE (84 aa). Phosphoserine occurs at positions 18, 93, and 264. Residues 292 to 351 form the LIM zinc-binding domain; that stretch reads PLCDKCGSGIVGAVVKARDKYRHPECFVCADCNLNLKQKGYFFIEGELYCETHARARTKP.

As to quaternary structure, interacts with ACTN2. Forms a heterodimer with PDLIM4 (via LIM domain). In terms of tissue distribution, isoform 1 is highly expressed in differentiated skeletal muscle. Isoform 2 is heart-specific.

It localises to the cytoplasm. It is found in the myofibril. The protein resides in the sarcomere. Its subcellular location is the z line. Its function is as follows. May play a role in the organization of actin filament arrays within muscle cells. The protein is PDZ and LIM domain protein 3 (PDLIM3) of Homo sapiens (Human).